We begin with the raw amino-acid sequence, 864 residues long: Alpha-glucosidase (864 aa).

A signal peptide spans 1-22 (MAKVSFIFVAIALITGNVLCQT). 3 N-linked (GlcNAc...) asparagine glycosylation sites follow: N187, N364, and N406. D430 (nucleophile) is an active-site residue. E433 is a catalytic residue. Residues N466 and N500 are each glycosylated (N-linked (GlcNAc...) asparagine). D567 (proton donor) is an active-site residue. 2 N-linked (GlcNAc...) asparagine glycosylation sites follow: N568 and N734.

This sequence belongs to the glycosyl hydrolase 31 family.

It carries out the reaction Hydrolysis of terminal, non-reducing (1-&gt;4)-linked alpha-D-glucose residues with release of alpha-D-glucose.. Functionally, hydrolyzes not only malto-oligosaccharides but also soluble starch. In Mucor javanicus, this protein is Alpha-glucosidase.